The following is a 184-amino-acid chain: MSRRNKRSRRRRKKPLNTIQPGPSKPSAQDEPIKSVSHHSSKIGTNPMLAFILGGNEDLSDDSDWDEDFSLENTLMPLNEVSLKGKHDSKHFNKGFDNNTALHEVNTKWEAFYSSVKIRQRDVKVYFATDDILIKVREADDIDRKGPWEQAAVDRLRFQRRIADTEKILSAVLLRKKLNPMEHE.

Positions 1–15 (MSRRNKRSRRRRKKP) are enriched in basic residues. The tract at residues 1-41 (MSRRNKRSRRRRKKPLNTIQPGPSKPSAQDEPIKSVSHHSS) is disordered. 2 important for host CHOP inhibition regions span residues 125–127 (VYF) and 169–173 (LSAVL).

Belongs to the asfivirus DP71L family. In terms of assembly, interacts (via C-terminus) with host PPP1CB.

Its function is as follows. Interacts with the host phosphatase PP1 catalytic subunit (PPP1CB) and recruits it to dephosphorylate EIF2S1/eIF2alpha and therefore restores the host translation that has been shut-down by the host. Also inhibits the EIF2S1/eIF2alpha-ATF4-DDIT3/CHOP pathway. This is Protein DP71L from Ornithodoros (relapsing fever ticks).